A 242-amino-acid polypeptide reads, in one-letter code: 4-hydroxy-tetrahydrodipicolinate reductase (242 aa).

NAD(+) is bound by residues 79–81 and 103–106; these read ATT and SANM. Histidine 135 (proton donor/acceptor) is an active-site residue. Position 136 (histidine 136) interacts with (S)-2,3,4,5-tetrahydrodipicolinate. The active-site Proton donor is lysine 139. 145-146 provides a ligand contact to (S)-2,3,4,5-tetrahydrodipicolinate; that stretch reads GT.

It belongs to the DapB family.

Its subcellular location is the cytoplasm. The enzyme catalyses (S)-2,3,4,5-tetrahydrodipicolinate + NAD(+) + H2O = (2S,4S)-4-hydroxy-2,3,4,5-tetrahydrodipicolinate + NADH + H(+). It catalyses the reaction (S)-2,3,4,5-tetrahydrodipicolinate + NADP(+) + H2O = (2S,4S)-4-hydroxy-2,3,4,5-tetrahydrodipicolinate + NADPH + H(+). Its pathway is amino-acid biosynthesis; L-lysine biosynthesis via DAP pathway; (S)-tetrahydrodipicolinate from L-aspartate: step 4/4. Its function is as follows. Catalyzes the conversion of 4-hydroxy-tetrahydrodipicolinate (HTPA) to tetrahydrodipicolinate. This is 4-hydroxy-tetrahydrodipicolinate reductase from Staphylococcus carnosus (strain TM300).